Reading from the N-terminus, the 129-residue chain is Phosphoribosyl-AMP cyclohydrolase (129 aa).

D87 contributes to the Mg(2+) binding site. C88 contributes to the Zn(2+) binding site. Mg(2+)-binding residues include D89 and D91. Residues C104 and C111 each coordinate Zn(2+).

Belongs to the PRA-CH family. In terms of assembly, homodimer. The cofactor is Mg(2+). It depends on Zn(2+) as a cofactor.

It is found in the cytoplasm. It carries out the reaction 1-(5-phospho-beta-D-ribosyl)-5'-AMP + H2O = 1-(5-phospho-beta-D-ribosyl)-5-[(5-phospho-beta-D-ribosylamino)methylideneamino]imidazole-4-carboxamide. Its pathway is amino-acid biosynthesis; L-histidine biosynthesis; L-histidine from 5-phospho-alpha-D-ribose 1-diphosphate: step 3/9. Catalyzes the hydrolysis of the adenine ring of phosphoribosyl-AMP. This Ruegeria sp. (strain TM1040) (Silicibacter sp.) protein is Phosphoribosyl-AMP cyclohydrolase.